Reading from the N-terminus, the 131-residue chain is Phosphoribosyl-AMP cyclohydrolase (131 aa).

Asp-74 lines the Mg(2+) pocket. Cys-75 is a binding site for Zn(2+). Residues Asp-76 and Asp-78 each coordinate Mg(2+). The Zn(2+) site is built by Cys-91 and Cys-98.

Belongs to the PRA-CH family. As to quaternary structure, homodimer. It depends on Mg(2+) as a cofactor. Zn(2+) is required as a cofactor.

It is found in the cytoplasm. The catalysed reaction is 1-(5-phospho-beta-D-ribosyl)-5'-AMP + H2O = 1-(5-phospho-beta-D-ribosyl)-5-[(5-phospho-beta-D-ribosylamino)methylideneamino]imidazole-4-carboxamide. The protein operates within amino-acid biosynthesis; L-histidine biosynthesis; L-histidine from 5-phospho-alpha-D-ribose 1-diphosphate: step 3/9. Its function is as follows. Catalyzes the hydrolysis of the adenine ring of phosphoribosyl-AMP. This chain is Phosphoribosyl-AMP cyclohydrolase, found in Bradyrhizobium sp. (strain BTAi1 / ATCC BAA-1182).